The following is a 358-amino-acid chain: NADH-quinone oxidoreductase subunit H (358 aa).

Helical transmembrane passes span 20–40 (ITVG…IPLI), 95–115 (ALFY…WAVI), 128–148 (IGLL…IIAG), 168–188 (ISYE…SGSM), 206–226 (VFSW…ISAV), 253–273 (GFAF…ISAL), 290–310 (WGFI…AVLY), and 334–354 (VLIP…ISPL).

It belongs to the complex I subunit 1 family. As to quaternary structure, NDH-1 is composed of 14 different subunits. Subunits NuoA, H, J, K, L, M, N constitute the membrane sector of the complex.

It is found in the cell inner membrane. It carries out the reaction a quinone + NADH + 5 H(+)(in) = a quinol + NAD(+) + 4 H(+)(out). Its function is as follows. NDH-1 shuttles electrons from NADH, via FMN and iron-sulfur (Fe-S) centers, to quinones in the respiratory chain. The immediate electron acceptor for the enzyme in this species is believed to be ubiquinone. Couples the redox reaction to proton translocation (for every two electrons transferred, four hydrogen ions are translocated across the cytoplasmic membrane), and thus conserves the redox energy in a proton gradient. This subunit may bind ubiquinone. The polypeptide is NADH-quinone oxidoreductase subunit H (Neisseria meningitidis serogroup C (strain 053442)).